Here is a 338-residue protein sequence, read N- to C-terminus: UDP-glucose 4-epimerase (338 aa).

Residues 11–12 (YI), 31–36 (DNLCNS), 58–59 (DI), 80–84 (FAGLK), N99, S124, Y149, K153, and F178 each bind NAD(+). Residues S124 and Y149 each coordinate substrate. Catalysis depends on Y149, which acts as the Proton acceptor. Substrate-binding positions include N179, 199–200 (NL), 216–218 (AIF), R231, 292–295 (REGD), and Y299.

Belongs to the NAD(P)-dependent epimerase/dehydratase family. Homodimer. NAD(+) serves as cofactor.

The catalysed reaction is UDP-alpha-D-glucose = UDP-alpha-D-galactose. It participates in carbohydrate metabolism; galactose metabolism. Inhibited by UDP-phenol and NaBH3CN. Its function is as follows. Involved in the metabolism of galactose. Catalyzes the conversion of UDP-galactose (UDP-Gal) to UDP-glucose (UDP-Glc) through a mechanism involving the transient reduction of NAD. It is only active on UDP-galactose and UDP-glucose. This Escherichia coli (strain K12) protein is UDP-glucose 4-epimerase (galE).